Reading from the N-terminus, the 98-residue chain is NADH-ubiquinone oxidoreductase chain 4L (98 aa).

3 helical membrane-spanning segments follow: residues 1-21 (MSLV…GLLM), 29-49 (SLLC…LTIL), and 59-79 (MPII…SLLV).

Belongs to the complex I subunit 4L family. Core subunit of respiratory chain NADH dehydrogenase (Complex I) which is composed of 45 different subunits.

It is found in the mitochondrion inner membrane. The enzyme catalyses a ubiquinone + NADH + 5 H(+)(in) = a ubiquinol + NAD(+) + 4 H(+)(out). In terms of biological role, core subunit of the mitochondrial membrane respiratory chain NADH dehydrogenase (Complex I) which catalyzes electron transfer from NADH through the respiratory chain, using ubiquinone as an electron acceptor. Part of the enzyme membrane arm which is embedded in the lipid bilayer and involved in proton translocation. The chain is NADH-ubiquinone oxidoreductase chain 4L (MT-ND4L) from Cervus elaphus (Red deer).